Reading from the N-terminus, the 459-residue chain is ATP-dependent protease ATPase subunit HslU (459 aa).

ATP is bound by residues Val-26, Gly-68 to Glu-73, Asp-271, Glu-337, and Arg-409.

This sequence belongs to the ClpX chaperone family. HslU subfamily. In terms of assembly, a double ring-shaped homohexamer of HslV is capped on each side by a ring-shaped HslU homohexamer. The assembly of the HslU/HslV complex is dependent on binding of ATP.

Its subcellular location is the cytoplasm. ATPase subunit of a proteasome-like degradation complex; this subunit has chaperone activity. The binding of ATP and its subsequent hydrolysis by HslU are essential for unfolding of protein substrates subsequently hydrolyzed by HslV. HslU recognizes the N-terminal part of its protein substrates and unfolds these before they are guided to HslV for hydrolysis. In Xylella fastidiosa (strain M23), this protein is ATP-dependent protease ATPase subunit HslU.